The following is a 626-amino-acid chain: MLAFAARTVVKPLGLLKPSSLMKVSGRFKAHQDALPRLPVPPLQQSLDHYLKALQPIVSEEEWAHTKQLVDEFQTSGGVGERLQKGLERRAKKMENWLSEWWLKTAYLQFRQPVVIYSSPGVLLPKQDFMDLQGQLRFAAKLIEGVLDFKSMIDNETLPVEFLGGQPLCMNQYYQILSSCRVPGLKQDSVVNFLKSKKPPTHITVVHNYQFFELDVYHSDGTPLTSDQIFVQLEKIWNSSLQSNKEPVGILTSNHRNSWAKAYSSLIKDKVNRESVNSIQKSIFTVCLDKQVPRVSDDVYRSHVAGQMLHGGGSKFNSGNRWFDKTLQFIVAEDGSCGMVYEHAAAEGPPIVALVDHVMEYTKKPELVRSPMVPLPMPKKLRFNITPEIKNDIEKAKQNISIMIQDLDIMMLVFHHFGKDFPKSQKLSPDAFIQIALQLAYYRIYGQACATYESASLRMFHLGRTDTIRSASTDSLAFVKGMDDPKVPEQQRVELLRKAVQAHRAYTDRAIRGEAFDRHLLGLKLQAIEDLVSMPDIFMDTSYAIAMHFNLSTSQVPAKTDCVMSFGPVVPDGYGICYNPMEAHINFSVSAYNSCAETNAARMAHYLEKALLDMRTLLQNHPRAKL.

An N6-succinyllysine modification is found at lysine 93. Lysine 261 carries the N6-acetyllysine; alternate modification. Lysine 261 bears the N6-succinyllysine; alternate mark. At lysine 268 the chain carries N6-acetyllysine. The active-site Proton acceptor is the histidine 343. CoA contacts are provided by residues lysine 419 and 423-430 (KSQKLSPD). Residues tyrosine 452 and serine 454 each coordinate (R)-carnitine. Position 456 (serine 456) interacts with CoA. Position 465 (threonine 465) interacts with (R)-carnitine. Arginine 504 and glutamine 555 together coordinate CoA. The short motif at 624-626 (AKL) is the Microbody targeting signal element.

This sequence belongs to the carnitine/choline acetyltransferase family. In terms of assembly, monomer. In terms of tissue distribution, expressed in flagella of epididymal sperm.

It is found in the endoplasmic reticulum. The protein localises to the peroxisome. It localises to the mitochondrion inner membrane. The catalysed reaction is (R)-carnitine + acetyl-CoA = O-acetyl-(R)-carnitine + CoA. It carries out the reaction propanoyl-CoA + (R)-carnitine = O-propanoyl-(R)-carnitine + CoA. It catalyses the reaction butanoyl-CoA + (R)-carnitine = O-butanoyl-(R)-carnitine + CoA. The enzyme catalyses hexanoyl-CoA + (R)-carnitine = O-hexanoyl-(R)-carnitine + CoA. The catalysed reaction is octanoyl-CoA + (R)-carnitine = O-octanoyl-(R)-carnitine + CoA. It carries out the reaction decanoyl-CoA + (R)-carnitine = O-decanoyl-(R)-carnitine + CoA. It catalyses the reaction 3-methylbutanoyl-CoA + (R)-carnitine = O-3-methylbutanoyl-(R)-carnitine + CoA. The enzyme catalyses 2-methylpropanoyl-CoA + (R)-carnitine = O-isobutanoyl-(R)-carnitine + CoA. The catalysed reaction is 2-methylbutanoyl-CoA + (R)-carnitine = O-2-methylbutanoyl-(R)-carnitine + CoA. It carries out the reaction acetoacetyl-CoA + (R)-carnitine = O-3-oxobutanoyl-(R)-carnitine + CoA. It catalyses the reaction 3-hydroxybutanoyl-CoA + (R)-carnitine = O-3-hydroxybutanoyl-(R)-carnitine + CoA. The enzyme catalyses 4,8-dimethylnonanoyl-CoA + (R)-carnitine = O-4,8-dimethylnonanoyl-(R)-carnitine + CoA. The catalysed reaction is 2,6-dimethylheptanoyl-CoA + (R)-carnitine = O-2,6-dimethylheptanoyl-(R)-carnitine + CoA. Functionally, catalyzes the reversible transfer of acyl groups from carnitine to coenzyme A (CoA) and regulates the acyl-CoA/CoA ratio. Also plays a crucial role in the transport of fatty acids for beta-oxidation. Responsible for the synthesis of short- and branched-chain acylcarnitines. Active towards some branched-chain amino acid oxidation pathway (BCAAO) intermediates. Trans-2-enoyl-CoAs and 2-methylacyl-CoAs are poor substrates. The polypeptide is Carnitine O-acetyltransferase (Rattus norvegicus (Rat)).